The chain runs to 379 residues: Acetylajmalan esterase 1 (379 aa).

The first 20 residues, 1–20 (MGFAPLLVFSLFVFAGTTKG), serve as a signal peptide directing secretion. Catalysis depends on Ser-34, which acts as the Nucleophile. Residues Asn-96, Asn-178, Asn-197, and Asn-291 are each glycosylated (N-linked (GlcNAc...) asparagine). Residues Asp-332 and His-335 contribute to the active site.

The protein belongs to the 'GDSL' lipolytic enzyme family. In terms of tissue distribution, expressed in roots and leaves at low levels.

The enzyme catalyses 17-O-acetylnorajmaline + H2O = norajmaline + acetate + H(+). It catalyses the reaction 17-O-acetylajmaline + H2O = ajmaline + acetate + H(+). It participates in alkaloid biosynthesis; ajmaline biosynthesis. Acetylesterase involved in the biosynthesis of ajmaline-type monoterpenoid indole alkaloids (MIAs) natural products, important plant-derived pharmaceuticals used in the therapy of heart disorders. Deacetylates 17-O-acetylnorajmaline to produce norajmaline. May also catalyze the conversion of 17-O-acetylajmaline to ajmaline. The protein is Acetylajmalan esterase 1 of Rauvolfia serpentina (Serpentine wood).